Reading from the N-terminus, the 98-residue chain is Large ribosomal subunit protein uL23 (98 aa).

The protein belongs to the universal ribosomal protein uL23 family. As to quaternary structure, part of the 50S ribosomal subunit. Contacts protein L29, and trigger factor when it is bound to the ribosome.

Functionally, one of the early assembly proteins it binds 23S rRNA. One of the proteins that surrounds the polypeptide exit tunnel on the outside of the ribosome. Forms the main docking site for trigger factor binding to the ribosome. The polypeptide is Large ribosomal subunit protein uL23 (Rickettsia bellii (strain OSU 85-389)).